Here is a 123-residue protein sequence, read N- to C-terminus: Thioredoxin domain-containing protein 17 (123 aa).

The Thioredoxin domain maps to 41–123 (SWCPDCVTAE…DLVRMMFTED (83 aa)). Catalysis depends on nucleophile residues Cys43 and Cys46. Cys43 and Cys46 are disulfide-bonded.

It belongs to the thioredoxin family. Predominantly expressed in liver, brain and muscle. Also expressed in kidney, intestine, skin, stomach, gill and head kidney.

The protein resides in the cytoplasm. Its function is as follows. Disulfide reductase. May participate in various redox reactions through the reversible oxidation of its active center dithiol to a disulfide and catalyze dithiol-disulfide exchange reactions. Has peroxidase activity and may contribute to the elimination of cellular hydrogen peroxide. May function as an antioxidant involved in response to viral infection. This chain is Thioredoxin domain-containing protein 17, found in Epinephelus coioides (Orange-spotted grouper).